We begin with the raw amino-acid sequence, 242 residues long: MKILIPTAKEMNTDLPSIETTLLRSESQAVLDALALYSASQLESFYKVSAEKAAEECQNIQALKRQTAQHYPALKLFDGLMYRHIKRDKLTEVEQAYLENHVFITSALYGVVPALSPMAPHRLDFLMKLKVAGKTLKSHWKAAYDEAVKQEEVIFSLLSSEFETVFSKEIRAKMVTFKFMEDRGGQLKIHSTISKKARGAFLTALIENQVQTVGEARRLNFAGFVYREDLSQPQGLVFVKEV.

The protein belongs to the UPF0246 family.

The sequence is that of UPF0246 protein SPN23F15130 from Streptococcus pneumoniae (strain ATCC 700669 / Spain 23F-1).